The following is a 508-amino-acid chain: General transcription factor IIF subunit 1 (508 aa).

Residue alanine 2 is modified to N-acetylalanine. Threonine 156 carries the post-translational modification Phosphothreonine. The segment at 177–448 (MQQRRLKDQD…SSGDVQVTED (272 aa)) is disordered. Phosphoserine occurs at positions 217, 218, 221, and 224. Positions 232–251 (SKAKKKAPVTKAGRKKKKKK) are enriched in basic residues. Acidic residues-rich tracts occupy residues 255 to 270 (DEAF…EGQE) and 303 to 325 (EQSE…EEEE). Threonine 331 carries the phosphothreonine modification. Over residues 343-355 (DDSDSSEESDIDS) the composition is skewed to acidic residues. The span at 364-374 (AKKKTPPKRER) shows a compositional bias: basic residues. Phosphoserine occurs at positions 377, 380, 381, and 385. Polar residues predominate over residues 378 to 388 (GGSSKGTSRPG). Residue threonine 389 is modified to Phosphothreonine. Residues 389–406 (TPSAEAASTSSTLRAAAS) show a composition bias toward low complexity. The residue at position 391 (serine 391) is a Phosphoserine. Lysine 407 is subject to N6-acetyllysine. The segment covering 428–443 (GPQSLSGKSTPSSGDV) has biased composition (polar residues). A phosphoserine mark is found at serine 431, serine 433, and serine 436. Position 437 is a phosphothreonine (threonine 437). Serine 440 is modified (phosphoserine).

It belongs to the TFIIF alpha subunit family. As to quaternary structure, heterodimer of an alpha and a beta subunit. Interacts with GTF2F2, CTDP1, TAF6/TAFII80 and URI1. Interacts with GTF2B (via C-terminus and preferentially via acetylated form); this interaction prevents binding of GTF2B to GTF2F2. Part of TBP-based Pol II pre-initiation complex (PIC), in which Pol II core assembles with general transcription factors and other specific initiation factors including GTF2E1, GTF2E2, GTF2F1, GTF2F2, TCEA1, ERCC2, ERCC3, GTF2H2, GTF2H3, GTF2H4, GTF2H5, GTF2A1, GTF2A2, GTF2B and TBP; this large multi-subunit PIC complex mediates DNA unwinding and targets Pol II core to the transcription start site where the first phosphodiester bond forms. Phosphorylated on Ser and other residues by TAF1 and casein kinase II-like kinases.

Its subcellular location is the nucleus. Its function is as follows. TFIIF is a general transcription initiation factor that binds to RNA polymerase II and helps to recruit it to the initiation complex in collaboration with TFIIB. It promotes transcription elongation. This Rattus norvegicus (Rat) protein is General transcription factor IIF subunit 1 (Gtf2f1).